A 404-amino-acid polypeptide reads, in one-letter code: Probable tRNA sulfurtransferase (404 aa).

Positions 60 to 165 (RSVIEALKPV…DEAAYLSHED (106 aa)) constitute a THUMP domain. Residues 183 to 184 (ML), 208 to 209 (HF), arginine 265, glycine 287, and glutamine 296 contribute to the ATP site.

The protein belongs to the ThiI family.

The protein resides in the cytoplasm. The catalysed reaction is [ThiI sulfur-carrier protein]-S-sulfanyl-L-cysteine + a uridine in tRNA + 2 reduced [2Fe-2S]-[ferredoxin] + ATP + H(+) = [ThiI sulfur-carrier protein]-L-cysteine + a 4-thiouridine in tRNA + 2 oxidized [2Fe-2S]-[ferredoxin] + AMP + diphosphate. It catalyses the reaction [ThiS sulfur-carrier protein]-C-terminal Gly-Gly-AMP + S-sulfanyl-L-cysteinyl-[cysteine desulfurase] + AH2 = [ThiS sulfur-carrier protein]-C-terminal-Gly-aminoethanethioate + L-cysteinyl-[cysteine desulfurase] + A + AMP + 2 H(+). It participates in cofactor biosynthesis; thiamine diphosphate biosynthesis. In terms of biological role, catalyzes the ATP-dependent transfer of a sulfur to tRNA to produce 4-thiouridine in position 8 of tRNAs, which functions as a near-UV photosensor. Also catalyzes the transfer of sulfur to the sulfur carrier protein ThiS, forming ThiS-thiocarboxylate. This is a step in the synthesis of thiazole, in the thiamine biosynthesis pathway. The sulfur is donated as persulfide by IscS. The chain is Probable tRNA sulfurtransferase from Streptococcus equi subsp. equi (strain 4047).